The sequence spans 189 residues: dCTP deaminase (189 aa).

Residues 112–117 (KSTYAR), 136–138 (TLE), Gln-157, Tyr-171, and Gln-181 contribute to the dCTP site. Glu-138 functions as the Proton donor/acceptor in the catalytic mechanism.

It belongs to the dCTP deaminase family. In terms of assembly, homotrimer.

It carries out the reaction dCTP + H2O + H(+) = dUTP + NH4(+). The protein operates within pyrimidine metabolism; dUMP biosynthesis; dUMP from dCTP (dUTP route): step 1/2. Catalyzes the deamination of dCTP to dUTP. The polypeptide is dCTP deaminase (Xanthomonas axonopodis pv. citri (strain 306)).